A 343-amino-acid polypeptide reads, in one-letter code: S-adenosylmethionine:tRNA ribosyltransferase-isomerase (343 aa).

It belongs to the QueA family. In terms of assembly, monomer.

The protein localises to the cytoplasm. It carries out the reaction 7-aminomethyl-7-carbaguanosine(34) in tRNA + S-adenosyl-L-methionine = epoxyqueuosine(34) in tRNA + adenine + L-methionine + 2 H(+). It functions in the pathway tRNA modification; tRNA-queuosine biosynthesis. Functionally, transfers and isomerizes the ribose moiety from AdoMet to the 7-aminomethyl group of 7-deazaguanine (preQ1-tRNA) to give epoxyqueuosine (oQ-tRNA). This chain is S-adenosylmethionine:tRNA ribosyltransferase-isomerase, found in Dehalococcoides mccartyi (strain CBDB1).